The sequence spans 236 residues: Sensory rhodopsin II (236 aa).

7 helical membrane-spanning segments follow: residues 4–24, 38–58, 73–93, 101–121, 122–142, 167–187, and 196–216; these read ITTW…VLAY, LLLI…ALGF, YVDW…LAGA, LVVL…TPSP, VSYA…YLLY, FVVV…AGVG, and LVVV…ALLA. K206 carries the N6-(retinylidene)lysine modification.

The protein belongs to the archaeal/bacterial/fungal opsin family. In terms of processing, the covalent binding of retinal to the apoprotein, bacterioopsin, generates bacteriorhodopsin.

It is found in the membrane. Mediates the photorepellent response. The polypeptide is Sensory rhodopsin II (sop2) (Haloarcula marismortui (strain ATCC 43049 / DSM 3752 / JCM 8966 / VKM B-1809) (Halobacterium marismortui)).